We begin with the raw amino-acid sequence, 131 residues long: MILGIGVDLVSVKRIRSASERTGGRLLVRLFTPAERDCCRARRAAYECYAARFAAKEAVFKALGTGFSGCCWHDVEITNGPGGGPVVALTGSAARVAARRGITGVLLSLSHEGDQAVAFAIAVGPSESQRK.

Mg(2+) contacts are provided by aspartate 8 and glutamate 57.

The protein belongs to the P-Pant transferase superfamily. AcpS family. It depends on Mg(2+) as a cofactor.

It is found in the cytoplasm. It carries out the reaction apo-[ACP] + CoA = holo-[ACP] + adenosine 3',5'-bisphosphate + H(+). Transfers the 4'-phosphopantetheine moiety from coenzyme A to a Ser of acyl-carrier-protein. The chain is Holo-[acyl-carrier-protein] synthase from Desulforudis audaxviator (strain MP104C).